We begin with the raw amino-acid sequence, 460 residues long: Hydroxymethylglutaryl-CoA synthase MYCGRDRAFT_54740 (460 aa).

Ala35 contacts (3S)-3-hydroxy-3-methylglutaryl-CoA. The active-site Proton donor/acceptor is Glu86. Cys120, Asn158, Thr162, Ser212, His262, Lys271, Asn339, and Ser373 together coordinate (3S)-3-hydroxy-3-methylglutaryl-CoA. The Acyl-thioester intermediate role is filled by Cys120. The active-site Proton donor/acceptor is His262.

The protein belongs to the thiolase-like superfamily. HMG-CoA synthase family.

The enzyme catalyses acetoacetyl-CoA + acetyl-CoA + H2O = (3S)-3-hydroxy-3-methylglutaryl-CoA + CoA + H(+). It participates in siderophore biosynthesis. In terms of biological role, hydroxymethylglutaryl-CoA synthase involved in the biosynthesis of a ferrichrome A-like siderophors which may contribute to organismal virulence. The first step of siderophore biosynthesis is performed by the HMG-CoA synthase (HMGS) MYCGRDRAFT_54740 which catalyzes the generation of HMG-CoA and CoA using acetoacetyl-CoA and acetyl-CoA as substrates. The enoyl-CoA isomerase/hydratase MYCGRDRAFT_76805 then catalyzes the conversion of HMG-CoA to methylglutaconyl-CoA. The acyltransferase MYCGRDRAFT_85486 then fuses methylglutaconyl-CoA with hydroxyornithine to yield methylglutaconyl hydroxyornithine. Methylglutaconyl hydroxyornithine is then available for use by the nonribosomal peptide synthetase NRPS2 to generate the ferrichrome A-like siderophore. This is Hydroxymethylglutaryl-CoA synthase MYCGRDRAFT_54740 (ERG13) from Zymoseptoria tritici (strain CBS 115943 / IPO323) (Speckled leaf blotch fungus).